The primary structure comprises 380 residues: Protein trichome birefringence-like 38 (380 aa).

The helical; Signal-anchor for type II membrane protein transmembrane segment at 7 to 29 threads the bilayer; sequence SLLLLFLPLLTVTILSGVEQAFA. Positions 134–136 match the GDS motif motif; it reads GDS. The DCXHWCLPGXXDXWN motif signature appears at 357–371; sequence DCSHWCLPGLPDTWN.

This sequence belongs to the PC-esterase family. TBL subfamily.

The protein resides in the membrane. Its function is as follows. May act as a bridging protein that binds pectin and other cell wall polysaccharides. Probably involved in maintaining esterification of pectins. May be involved in the specific O-acetylation of cell wall polymers. The protein is Protein trichome birefringence-like 38 (TBL38) of Arabidopsis thaliana (Mouse-ear cress).